Consider the following 156-residue polypeptide: Arginine repressor (156 aa).

The protein belongs to the ArgR family.

The protein resides in the cytoplasm. The protein operates within amino-acid biosynthesis; L-arginine biosynthesis [regulation]. In terms of biological role, regulates arginine biosynthesis genes. This is Arginine repressor from Vibrio campbellii (strain ATCC BAA-1116).